The following is a 129-amino-acid chain: HTH-type transcriptional regulator DdrOP3 (129 aa).

The HTH cro/C1-type domain occupies 7–61; sequence LRELRQERGLRLKDIAGAAQISVPYLSDLERGRTNPSLETLQSLASTYGITVHDL. Positions 18–37 form a DNA-binding region, H-T-H motif; it reads LKDIAGAAQISVPYLSDLER.

In terms of processing, cleaved between Leu-106 and Arg-107 by the IrrE metalloprotease after exposure to radiation. Cleavage inactivates DdrOP3, leading to derepression of the target genes.

In terms of biological role, repressor specific for genes preceded by a radiation/desiccation response motif (RDRM) site, which is present upstream of several radiation-induced genes. This is HTH-type transcriptional regulator DdrOP3 from Deinococcus deserti (strain DSM 17065 / CIP 109153 / LMG 22923 / VCD115).